The primary structure comprises 136 residues: Large ribosomal subunit protein uL16 (136 aa).

It belongs to the universal ribosomal protein uL16 family. As to quaternary structure, part of the 50S ribosomal subunit.

Functionally, binds 23S rRNA and is also seen to make contacts with the A and possibly P site tRNAs. The sequence is that of Large ribosomal subunit protein uL16 from Aliivibrio fischeri (strain ATCC 700601 / ES114) (Vibrio fischeri).